The primary structure comprises 751 residues: Catalase-peroxidase (751 aa).

The tract at residues 1–21 (MSNESKCPFHQTAGGGTTNRD) is disordered. Residues 90–244 (WHSAGTYRIG…LAAVQMGLIY (155 aa)) constitute a cross-link (tryptophyl-tyrosyl-methioninium (Trp-Tyr) (with M-270)). Histidine 91 acts as the Proton acceptor in catalysis. A cross-link (tryptophyl-tyrosyl-methioninium (Tyr-Met) (with W-90)) is located at residues 244–270 (YVNPEGPEGNPDPVASGKDIRETFGRM). Histidine 285 is a binding site for heme b. Residues 365-390 (AHQWRPKEGKGAGTVPDAHDPGKKHA) form a disordered region.

This sequence belongs to the peroxidase family. Peroxidase/catalase subfamily. Homodimer or homotetramer. Heme b is required as a cofactor. In terms of processing, formation of the three residue Trp-Tyr-Met cross-link is important for the catalase, but not the peroxidase activity of the enzyme.

The enzyme catalyses H2O2 + AH2 = A + 2 H2O. It carries out the reaction 2 H2O2 = O2 + 2 H2O. Bifunctional enzyme with both catalase and broad-spectrum peroxidase activity. The chain is Catalase-peroxidase from Pseudomonas putida (strain GB-1).